We begin with the raw amino-acid sequence, 174 residues long: MTQTIFMVGARGAGKTTIGKALAQALGYRFIDTDLFMQQTLQSSVAEIVAREGWDGFRLRESMALQTVTAPKTVVATGGGAVLSHDNRTFMRQHGMVIYLRASANVLAERLAEDPEDAQRPSLTGKPIVEEMLDVLASREPLYQEVAHHVLDATQPPEEVVEQILHILADEKVK.

12 to 17 (GAGKTT) contacts ATP. 2 residues coordinate Mg(2+): threonine 16 and aspartate 32. Substrate-binding residues include aspartate 34, arginine 58, and glycine 79. An LID domain region spans residues 112 to 126 (AEDPEDAQRPSLTGK). Position 120 (arginine 120) interacts with ATP. Arginine 139 serves as a coordination point for substrate. Position 155 (glutamine 155) interacts with ATP.

Belongs to the shikimate kinase family. AroL subfamily. As to quaternary structure, monomer. Requires Mg(2+) as cofactor.

Its subcellular location is the cytoplasm. It carries out the reaction shikimate + ATP = 3-phosphoshikimate + ADP + H(+). It participates in metabolic intermediate biosynthesis; chorismate biosynthesis; chorismate from D-erythrose 4-phosphate and phosphoenolpyruvate: step 5/7. In terms of biological role, catalyzes the specific phosphorylation of the 3-hydroxyl group of shikimic acid using ATP as a cosubstrate. The polypeptide is Shikimate kinase 2 (Yersinia enterocolitica serotype O:8 / biotype 1B (strain NCTC 13174 / 8081)).